The primary structure comprises 111 residues: Aspartate 1-decarboxylase (111 aa).

The active-site Schiff-base intermediate with substrate; via pyruvic acid is the Ser-25. Ser-25 carries the post-translational modification Pyruvic acid (Ser). Substrate is bound at residue Thr-57. The active-site Proton donor is the Tyr-58. A substrate-binding site is contributed by 73 to 75 (GPA).

The protein belongs to the PanD family. As to quaternary structure, heterooctamer of four alpha and four beta subunits. Requires pyruvate as cofactor. Is synthesized initially as an inactive proenzyme, which is activated by self-cleavage at a specific serine bond to produce a beta-subunit with a hydroxyl group at its C-terminus and an alpha-subunit with a pyruvoyl group at its N-terminus.

Its subcellular location is the cytoplasm. It carries out the reaction L-aspartate + H(+) = beta-alanine + CO2. It functions in the pathway cofactor biosynthesis; (R)-pantothenate biosynthesis; beta-alanine from L-aspartate: step 1/1. Catalyzes the pyruvoyl-dependent decarboxylation of aspartate to produce beta-alanine. This Francisella tularensis subsp. holarctica (strain LVS) protein is Aspartate 1-decarboxylase.